The chain runs to 751 residues: Catalase-peroxidase (751 aa).

The disordered stretch occupies residues 1-21; the sequence is MSNESKCPFHQTAGGGTTNRD. The segment at residues 90–244 is a cross-link (tryptophyl-tyrosyl-methioninium (Trp-Tyr) (with M-270)); sequence WHSAGTYRIG…LAAVQMGLIY (155 aa). H91 serves as the catalytic Proton acceptor. Residues 244-270 constitute a cross-link (tryptophyl-tyrosyl-methioninium (Tyr-Met) (with W-90)); that stretch reads YVNPEGPEGNPDPVASGKDIRETFGRM. H285 is a binding site for heme b. Residues 365–390 form a disordered region; it reads AHQWRPKEGKGAGTVPDAHDPGKKHA.

It belongs to the peroxidase family. Peroxidase/catalase subfamily. Homodimer or homotetramer. Heme b serves as cofactor. Formation of the three residue Trp-Tyr-Met cross-link is important for the catalase, but not the peroxidase activity of the enzyme.

The enzyme catalyses H2O2 + AH2 = A + 2 H2O. It carries out the reaction 2 H2O2 = O2 + 2 H2O. Its function is as follows. Bifunctional enzyme with both catalase and broad-spectrum peroxidase activity. This chain is Catalase-peroxidase, found in Pseudomonas putida (strain GB-1).